The sequence spans 795 residues: TBC1 domain family member 5 (795 aa).

Residues 1–13 are compositionally biased toward basic and acidic residues; the sequence is MYHSLSETRHPLQ. Positions 1 to 49 are disordered; sequence MYHSLSETRHPLQPEEQEVGIDPLSSYSNKSGGDSNKNGRRTSSTLDSE. A compositionally biased stretch (polar residues) spans 25–49; the sequence is SSYSNKSGGDSNKNGRRTSSTLDSE. Phosphothreonine is present on T42. 2 positions are modified to phosphoserine: S43 and S44. The required for interaction with retromer; involved in interaction with ATG8 family proteins stretch occupies residues 56–64; that stretch reads RKEWEELFV. The LIR 1 motif lies at 57-62; it reads KEWEEL. Residues 81–359 form the Rab-GAP TBC domain; that stretch reads LRSSRFRSIC…VVWDALFADG (279 aa). The residue at position 460 (S460) is a Phosphoserine. Residues 475-564 are disordered; the sequence is PGSAGGPVPG…PPSSATKKDS (90 aa). The segment covering 484–496 has biased composition (low complexity); it reads GGNSSSSSSVVIP. A phosphoserine mark is found at S522, S539, S541, S544, S554, S570, S584, and S730. The span at 523–542 shows a compositional bias: polar residues; sequence MPVQLNKGLSSKNISSSPSV. The segment covering 554–564 has biased composition (polar residues); the sequence is SPPSSATKKDS. Residues 674 to 795 form a disordered region; it reads HYCSSGQGQG…GFTIVSPLDI (122 aa). A compositionally biased stretch (polar residues) spans 727 to 748; that stretch reads ARGSFSGQAQPLRTLRSTSGKS. The span at 765-776 shows a compositional bias: low complexity; that stretch reads PASASSSNPSSS. Residues 785–789 carry the LIR 2 motif; sequence SGFTI. A required for interaction with ATG8 family proteins region spans residues 786-791; sequence GFTIVS. A Phosphoserine modification is found at S791.

As to quaternary structure, interacts with MAP1LC3A, MAP1LC3B, MAP1LC3C, GABARAP, GABARAPL1, GABARAPL2. Interacts with VPS29 and VPS35; indicative for an association with retromer CSC subcomplex. MAP1LC3A and VPS29 compete for binding to TBC1D5. Interacts with AP2M1; indicative for an association with the AP2 complex. Interacts with ULK1 and ATG13 (phosphorylated); indicative for an association with the activated ULK1-ATG13-FIP200 complex. Interacts with ATG9A; the interactions seems to be restricted to the AP2-clathrin-associated fraction of ATG9A.

It is found in the endosome membrane. The protein localises to the cytoplasmic vesicle. The protein resides in the autophagosome. Its function is as follows. May act as a GTPase-activating protein (GAP) for Rab family protein(s). May act as a GAP for RAB7A. Can displace RAB7A and retromer CSC subcomplex from the endosomal membrane to the cytosol; at least retromer displacement seems to require its catalytic activity. Required for retrograde transport of cargo proteins from endosomes to the trans-Golgi network (TGN); the function seems to require its catalytic activity. Involved in regulation of autophagy. May act as a molecular switch between endosomal and autophagosomal transport and is involved in reprogramming vesicle trafficking upon autophagy induction. Involved in the trafficking of ATG9A upon activation of autophagy. May regulate the recruitment of ATG9A-AP2-containing vesicles to autophagic membranes. The sequence is that of TBC1 domain family member 5 (TBC1D5) from Homo sapiens (Human).